The following is a 307-amino-acid chain: Probable acetylxylan esterase A (307 aa).

An N-terminal signal peptide occupies residues 1-19 (MILLSYLLTYLLCALTCSA). Ser150 functions as the Charge relay system in the catalytic mechanism. Asn192 and Asn270 each carry an N-linked (GlcNAc...) asparagine glycan.

This sequence belongs to the carbohydrate esterase 1 (CE1) family. AxeA subfamily. Monomer.

Its subcellular location is the secreted. It carries out the reaction Deacetylation of xylans and xylo-oligosaccharides.. It functions in the pathway glycan degradation; xylan degradation. Its function is as follows. Acetylxylan esterase involved in the hydrolysis of xylan, a major structural heterogeneous polysaccharide found in plant biomass representing the second most abundant polysaccharide in the biosphere, after cellulose. Degrades acetylated xylans by cleaving acetyl side groups from the hetero-xylan backbone. The sequence is that of Probable acetylxylan esterase A (axeA) from Aspergillus flavus (strain ATCC 200026 / FGSC A1120 / IAM 13836 / NRRL 3357 / JCM 12722 / SRRC 167).